Here is a 372-residue protein sequence, read N- to C-terminus: Meiotic drive suppressor wtf18 (372 aa).

The next 6 membrane-spanning stretches (helical) occupy residues 86 to 106 (FLLR…TAWV), 120 to 140 (AFSV…FCFF), 153 to 173 (VTVI…AQCV), 197 to 217 (DLVV…FGCV), 233 to 253 (CSIS…IWTL), and 257 to 277 (LFGL…TKGL).

It belongs to the WTF family. As to quaternary structure, homomer. Interacts with other proteins that exhibit high sequence similarity.

It localises to the spore membrane. The protein localises to the vacuole membrane. Acts as a suppressor component of the dual wtf meiotic drive system, and can suppress but not confer meiotic drive by compatible poisons. Wtf meiotic drive systems promote unequal transmission of alleles from the parental zygote to progeny spores by encoding a poison and an antidote from the same locus; the poison is trans-acting and forms toxic aggregates in all spores within an ascus, wherease the antidote is spore-specific and targets aggregates for degradation by the vacuole. Meiotic drive by wtf systems therefore lead to poisoning of all progeny that do not inherit the dual poison/antidote allele, or express a compatible antidote. The sequence is that of Meiotic drive suppressor wtf18 from Schizosaccharomyces pombe (strain 972 / ATCC 24843) (Fission yeast).